The chain runs to 159 residues: 3-hydroxyacyl-[acyl-carrier-protein] dehydratase FabZ (159 aa).

Histidine 65 is an active-site residue.

This sequence belongs to the thioester dehydratase family. FabZ subfamily.

Its subcellular location is the cytoplasm. The catalysed reaction is a (3R)-hydroxyacyl-[ACP] = a (2E)-enoyl-[ACP] + H2O. Functionally, involved in unsaturated fatty acids biosynthesis. Catalyzes the dehydration of short chain beta-hydroxyacyl-ACPs and long chain saturated and unsaturated beta-hydroxyacyl-ACPs. The chain is 3-hydroxyacyl-[acyl-carrier-protein] dehydratase FabZ from Microcystis aeruginosa (strain NIES-843 / IAM M-2473).